Reading from the N-terminus, the 217-residue chain is Homologous-pairing protein 2 homolog (217 aa).

Residues 89–117 (LDASIMALTAKVQGLQQSCRHMEAELKEL) form an interaction with NR3C1, homodimerization and transcriptional activation almost abolished when missing region. Residues 93-153 (IMALTAKVQG…LKNIKAATNH (61 aa)) are a coiled coil. The DNA-binding stretch occupies residues 118 to 182 (TSALTTPEMQ…WRKRKRMTTE (65 aa)). The segment at 118-182 (TSALTTPEMQ…WRKRKRMTTE (65 aa)) is interaction with NR3C1 decreased when missing.

This sequence belongs to the HOP2 family. In terms of assembly, forms a stable heterodimer with MND1. Interacts with PSMC3/TBP1. Interacts with the DNA-binding domain of the nuclear receptors NR3C1/GR, ESR2/ER-beta, THRB and RXRA. In terms of processing, phosphorylated by PKA, PKC and MAPK.

The protein resides in the nucleus. Functionally, plays an important role in meiotic recombination. Stimulates DMC1-mediated strand exchange required for pairing homologous chromosomes during meiosis. The complex PSMC3IP/MND1 binds DNA, stimulates the recombinase activity of DMC1 as well as DMC1 D-loop formation from double-strand DNA. This complex stabilizes presynaptic RAD51 and DMC1 filaments formed on single strand DNA to capture double-strand DNA. This complex stimulates both synaptic and presynaptic critical steps in RAD51 and DMC1-promoted homologous pairing. May inhibit HIV-1 viral protein TAT activity and modulate the activity of proteasomes through association with PSMC3. Plays a role as a coactivator in nuclear receptor-mediated transcription. In Rattus norvegicus (Rat), this protein is Homologous-pairing protein 2 homolog (Psmc3ip).